The sequence spans 513 residues: NAD(P)H-quinone oxidoreductase subunit 2 (513 aa).

14 consecutive transmembrane segments (helical) span residues 15–35, 43–63, 80–100, 110–130, 133–153, 168–188, 211–231, 245–265, 281–301, 307–327, 335–355, 379–399, 401–421, and 467–487; these read VIWPEGILIITLMVILIGDLI, WLPYVAIAGLLAAVVALYFTW, LSIVFRAIIALSTASTVLMSI, LAEFLAIMLTATLGGMFLSGA, LVMIFISLEMLSISSYLMTGY, LLIGASSSAIFLYGVSLLYGL, LALAIALVFVIAGIAFKISAV, PTPVVAFLSVGSKAAGFALAI, FIFIALAILSMILGNVVALAQ, MLAYSSIGQAGFVMIGLTAGT, IFYLLIYLFMNLGAFACVILF, LCLSICLLSLGGIPPLAGFFG, IYLFWAGWQAGLYALVLVGLV, and VGIVLSLVATSLAGILSNPLF.

It belongs to the complex I subunit 2 family. NDH-1 can be composed of about 15 different subunits; different subcomplexes with different compositions have been identified which probably have different functions.

It is found in the cellular thylakoid membrane. The catalysed reaction is a plastoquinone + NADH + (n+1) H(+)(in) = a plastoquinol + NAD(+) + n H(+)(out). The enzyme catalyses a plastoquinone + NADPH + (n+1) H(+)(in) = a plastoquinol + NADP(+) + n H(+)(out). NDH-1 shuttles electrons from an unknown electron donor, via FMN and iron-sulfur (Fe-S) centers, to quinones in the respiratory and/or the photosynthetic chain. The immediate electron acceptor for the enzyme in this species is believed to be plastoquinone. Couples the redox reaction to proton translocation, and thus conserves the redox energy in a proton gradient. Cyanobacterial NDH-1 also plays a role in inorganic carbon-concentration. This chain is NAD(P)H-quinone oxidoreductase subunit 2, found in Microcystis aeruginosa (strain NIES-843 / IAM M-2473).